Reading from the N-terminus, the 202-residue chain is Putative 3-methyladenine DNA glycosylase (202 aa).

The protein belongs to the DNA glycosylase MPG family.

The sequence is that of Putative 3-methyladenine DNA glycosylase from Staphylococcus haemolyticus (strain JCSC1435).